Here is a 91-residue protein sequence, read N- to C-terminus: Small ribosomal subunit protein uS15c (91 aa).

This sequence belongs to the universal ribosomal protein uS15 family. In terms of assembly, part of the 30S ribosomal subunit.

It localises to the plastid. The protein resides in the chloroplast. The sequence is that of Small ribosomal subunit protein uS15c (rps15) from Cicer arietinum (Chickpea).